The following is a 443-amino-acid chain: Glutamate-rich protein 1 (443 aa).

An N6-acetyllysine modification is found at Lys12. The interval 15 to 333 (QRLFPPVPSG…DASEEDDTIT (319 aa)) is disordered. Basic and acidic residues predominate over residues 42 to 54 (VTSEKVSQKHAEP). Residues 87–97 (SCGSPENASSG) show a composition bias toward polar residues. Composition is skewed to basic residues over residues 109–124 (PKRR…KKFK) and 159–176 (KNKK…RKKA). Residues 205-226 (ACEEDGVDTSEEDPTLAGEEDV) show a composition bias toward acidic residues. Residues Ser238 and Ser254 each carry the phosphoserine modification. A compositionally biased stretch (acidic residues) spans 250–266 (GADASEEDPTPAGEEDV). Thr277 carries the post-translational modification Phosphothreonine. Positions 281–296 (DLTRAGEEDGKDTREE) are enriched in basic and acidic residues. The segment covering 297-332 (DGADASEEDPTWAGEEEGADSGEEDGADASEEDDTI) has biased composition (acidic residues).

This Homo sapiens (Human) protein is Glutamate-rich protein 1 (ERICH1).